The primary structure comprises 234 residues: Sugar fermentation stimulation protein A (234 aa).

Positions Leu-201 to Ser-220 form a DNA-binding region, H-T-H motif.

This sequence belongs to the SfsA family.

Binds to DNA non-specifically. Could be a regulatory factor involved in maltose metabolism. This chain is Sugar fermentation stimulation protein A, found in Shigella sonnei (strain Ss046).